We begin with the raw amino-acid sequence, 366 residues long: ADP-ribosylarginine hydrolase Tri1 (366 aa).

Residues 1–65 (MIDLREDTWT…LNTPPCLIPE (65 aa)) form an N-terminal extension region. The segment at 74–366 (GALVGLAIGD…LFYMAPEEDF (293 aa)) is ADP-ribosyl hydrolase domain. Residues Thr116, Asp117, Asp118, Asp161, and Asp317 each contribute to the Mg(2+) site.

This sequence belongs to the ADP-ribosylglycohydrolase family. Forms a stable complex with cognate effector protein Tre1-Sp. Requires Mg(2+) as cofactor.

It carries out the reaction N(omega)-(ADP-D-ribosyl)-L-arginyl-[protein] + H2O = ADP-D-ribose + L-arginyl-[protein]. Functionally, immunity component of a contact-dependent interbacterial competition system (also called effector-immunity systems). Acts as an arginine mono-ADP-ribosylhydrolase, mediating the removal of mono-ADP-ribose attached to arginine residues on proteins. De-ADP-ribosylates FtsZ, is able to act on other proteins as well. Neutralizes the toxic activity of cognate toxin Tre1-Sp. Expression of this protein alone in E.coli partially protects the cells against competition by wild-type S.proteamaculans. Neutralizes Tre1-Sp both by occluding its active site via its N-terminal extension and by hydrolyzing the ADP-ribosyl moiety from FtsZ; the 2 activities are dissociable by mutagenesis. The sequence is that of ADP-ribosylarginine hydrolase Tri1 from Serratia proteamaculans (strain 568).